Reading from the N-terminus, the 149-residue chain is MQVILLDKVANLGSLGDQVNVKAGYARNFLVPQGKAVPATKKNVEFFEARRAELEAKLADVLAAAEARAEQINALESVTIASKAGDEGKLFGSIGTRDIADAVTAAGVKVAKSEVRLPNGVLRNVGEHEVNFQVHSEVFAKVIINVVAE.

Belongs to the bacterial ribosomal protein bL9 family.

In terms of biological role, binds to the 23S rRNA. This Klebsiella pneumoniae subsp. pneumoniae (strain ATCC 700721 / MGH 78578) protein is Large ribosomal subunit protein bL9.